The chain runs to 419 residues: Probable sodium/metabolite cotransporter BASS2, chloroplastic (419 aa).

The transit peptide at 1–45 (MAASTTCPARSMASVSRALRPRPHAAIASAAVRTAARLGGGLGIV) directs the protein to the chloroplast. The next 9 helical transmembrane spans lie at 106 to 126 (IVEL…IIGI), 137 to 157 (TDLF…TLTF), 170 to 190 (VGVG…AIAM), 194 to 214 (LSAP…GQAS), 225 to 245 (VALS…MTPL), 259 to 279 (AAGL…VGVL), 291 to 311 (IISI…ASPI), 323 to 343 (GQLI…GYWL), and 384 to 404 (VPSA…AVFW).

Belongs to the bile acid:sodium symporter (BASS) (TC 2.A.28) family.

Its subcellular location is the membrane. It localises to the plastid. The protein localises to the chloroplast envelope. May function as sodium-coupled metabolite transporter across the chloroplast envelope. The sequence is that of Probable sodium/metabolite cotransporter BASS2, chloroplastic (BASS2) from Oryza sativa subsp. japonica (Rice).